Consider the following 198-residue polypeptide: Transcriptional regulator GfcR (198 aa).

Belongs to the purine/pyrimidine phosphoribosyltransferase family. GfcR subfamily.

The polypeptide is Transcriptional regulator GfcR (Methanosphaera stadtmanae (strain ATCC 43021 / DSM 3091 / JCM 11832 / MCB-3)).